The primary structure comprises 109 residues: Mitochondrial pyruvate carrier 1 (109 aa).

Ala2 bears the N-acetylalanine mark. Residues 2-20 lie on the Mitochondrial matrix side of the membrane; sequence AGALVRKAADYVRSKDFRD. The helical transmembrane segment at 21 to 41 threads the bilayer; the sequence is YLMSTHFWGPVANWGLPIAAI. Residues 42-52 lie on the Mitochondrial intermembrane side of the membrane; it reads NDMKKSPEIIS. Residues 53–71 form a helical membrane-spanning segment; it reads GRMTFALCCYSLTFMRFAY. Lys72 carries the post-translational modification N6-acetyllysine. At 72–109 the chain is on the mitochondrial matrix side; sequence KVQPRNWLLFACHATNEVAQLIQGGRLIKHEMTKTASA.

It belongs to the mitochondrial pyruvate carrier (MPC) (TC 2.A.105) family. Homodimer. Forms heterodimer with MPC2. The heterodimer is the more stable and dominant form.

Its subcellular location is the mitochondrion inner membrane. It carries out the reaction pyruvate(out) + H(+)(out) = pyruvate(in) + H(+)(in). Mediates the uptake of pyruvate into mitochondria. This Homo sapiens (Human) protein is Mitochondrial pyruvate carrier 1 (MPC1).